Reading from the N-terminus, the 485-residue chain is BTB/POZ domain-containing protein YLR108C (485 aa).

The BTB domain maps to E26–T121.

Its subcellular location is the nucleus. This Saccharomyces cerevisiae (strain ATCC 204508 / S288c) (Baker's yeast) protein is BTB/POZ domain-containing protein YLR108C.